The primary structure comprises 449 residues: Phosphoglucosamine mutase (449 aa).

Ser-104 serves as the catalytic Phosphoserine intermediate. Mg(2+) contacts are provided by Ser-104, Asp-243, Asp-245, and Asp-247. A Phosphoserine modification is found at Ser-104.

It belongs to the phosphohexose mutase family. Mg(2+) serves as cofactor. Activated by phosphorylation.

It catalyses the reaction alpha-D-glucosamine 1-phosphate = D-glucosamine 6-phosphate. Functionally, catalyzes the conversion of glucosamine-6-phosphate to glucosamine-1-phosphate. The sequence is that of Phosphoglucosamine mutase from Xanthomonas axonopodis pv. citri (strain 306).